Consider the following 177-residue polypeptide: Adenine phosphoribosyltransferase (177 aa).

It belongs to the purine/pyrimidine phosphoribosyltransferase family. In terms of assembly, homodimer.

The protein resides in the cytoplasm. The enzyme catalyses AMP + diphosphate = 5-phospho-alpha-D-ribose 1-diphosphate + adenine. The protein operates within purine metabolism; AMP biosynthesis via salvage pathway; AMP from adenine: step 1/1. In terms of biological role, catalyzes a salvage reaction resulting in the formation of AMP, that is energically less costly than de novo synthesis. This Leptospira biflexa serovar Patoc (strain Patoc 1 / Ames) protein is Adenine phosphoribosyltransferase.